Reading from the N-terminus, the 165-residue chain is Large ribosomal subunit protein uL10 (165 aa).

This sequence belongs to the universal ribosomal protein uL10 family. In terms of assembly, part of the ribosomal stalk of the 50S ribosomal subunit. The N-terminus interacts with L11 and the large rRNA to form the base of the stalk. The C-terminus forms an elongated spine to which L12 dimers bind in a sequential fashion forming a multimeric L10(L12)X complex.

Forms part of the ribosomal stalk, playing a central role in the interaction of the ribosome with GTP-bound translation factors. The protein is Large ribosomal subunit protein uL10 (rplJ) of Halalkalibacterium halodurans (strain ATCC BAA-125 / DSM 18197 / FERM 7344 / JCM 9153 / C-125) (Bacillus halodurans).